The chain runs to 432 residues: Guanine/hypoxanthine permease PbuO (432 aa).

10 helical membrane-spanning segments follow: residues 15 to 35, 51 to 71, 92 to 112, 133 to 153, 174 to 194, 196 to 216, 234 to 254, 340 to 360, 379 to 399, and 412 to 432; these read IIAG…NPVI, IIAS…PIAI, GITY…FIIL, ITTG…GIVA, LVGL…ALFI, MAAT…KGFM, FGDV…LVTI, ALSG…SLMM, LVIL…LGFI, and REIH…LFIL.

Belongs to the nucleobase:cation symporter-2 (NCS2) (TC 2.A.40) family. Azg-like subfamily.

It localises to the cell membrane. In terms of biological role, involved in the uptake of the purine bases hypoxanthine and guanine. May work at purine concentrations higher than 100 uM. The chain is Guanine/hypoxanthine permease PbuO (pbuO) from Bacillus subtilis (strain 168).